A 70-amino-acid chain; its full sequence is Putative membrane protein insertion efficiency factor (70 aa).

This sequence belongs to the UPF0161 family.

It is found in the cell inner membrane. In terms of biological role, could be involved in insertion of integral membrane proteins into the membrane. The polypeptide is Putative membrane protein insertion efficiency factor (Francisella tularensis subsp. tularensis (strain SCHU S4 / Schu 4)).